The following is a 72-amino-acid chain: Bowman-Birk type proteinase inhibitor 2a (72 aa).

7 disulfides stabilise this stretch: C8-C61, C9-C24, C12-C57, C14-C22, C31-C38, C35-C50, and C40-C48.

Dimer.

Functionally, inhibits trypsin (IC(50)=0.9 nM) and alpha-chymotrypsin (IC(50)=1.1 nM). This chain is Bowman-Birk type proteinase inhibitor 2a, found in Lathyrus sativus (White vetchling).